The following is a 1070-amino-acid chain: DNA-directed RNA polymerase subunit beta (1070 aa).

Belongs to the RNA polymerase beta chain family. As to quaternary structure, in plastids the minimal PEP RNA polymerase catalytic core is composed of four subunits: alpha, beta, beta', and beta''. When a (nuclear-encoded) sigma factor is associated with the core the holoenzyme is formed, which can initiate transcription.

The protein resides in the plastid. The protein localises to the chloroplast. It catalyses the reaction RNA(n) + a ribonucleoside 5'-triphosphate = RNA(n+1) + diphosphate. Functionally, DNA-dependent RNA polymerase catalyzes the transcription of DNA into RNA using the four ribonucleoside triphosphates as substrates. This is DNA-directed RNA polymerase subunit beta from Solanum lycopersicum (Tomato).